Here is a 74-residue protein sequence, read N- to C-terminus: Tetrahydromethanopterin S-methyltransferase subunit G (74 aa).

Residues 47–67 (VGIAYGLAIGFIFVYVLGTVL) traverse the membrane as a helical segment.

This sequence belongs to the MtrG family. In terms of assembly, the complex is composed of 8 subunits; MtrA, MtrB, MtrC, MtrD, MtrE, MtrF, MtrG and MtrH.

Its subcellular location is the cell membrane. It catalyses the reaction 5-methyl-5,6,7,8-tetrahydromethanopterin + coenzyme M + 2 Na(+)(in) = 5,6,7,8-tetrahydromethanopterin + methyl-coenzyme M + 2 Na(+)(out). The protein operates within one-carbon metabolism; methanogenesis from CO(2); methyl-coenzyme M from 5,10-methylene-5,6,7,8-tetrahydromethanopterin: step 2/2. Functionally, part of a complex that catalyzes the formation of methyl-coenzyme M and tetrahydromethanopterin from coenzyme M and methyl-tetrahydromethanopterin. This is an energy-conserving, sodium-ion translocating step. This Methanococcus maripaludis (strain DSM 14266 / JCM 13030 / NBRC 101832 / S2 / LL) protein is Tetrahydromethanopterin S-methyltransferase subunit G.